The primary structure comprises 731 residues: Conserved oligomeric Golgi complex subunit 2 (731 aa).

2 disordered regions span residues 469 to 496 (ESAK…SEAS) and 659 to 680 (LKQA…GMSD).

It belongs to the COG2 family. In terms of assembly, component of the conserved oligomeric Golgi complex which is composed of eight different subunits and is required for normal Golgi morphology and localization.

The protein resides in the golgi apparatus membrane. Required for normal Golgi morphology and function. The chain is Conserved oligomeric Golgi complex subunit 2 (Cog2) from Mus musculus (Mouse).